Reading from the N-terminus, the 72-residue chain is Protein kish-A (72 aa).

Positions 1–26 are cleaved as a signal peptide; the sequence is MSAIFNFQSLLIVILLLICTCAYLRS. Residues 27–53 are Extracellular-facing; sequence LVPNLLDKNKTGVLGIFWKCARIGERK. N35 carries an N-linked (GlcNAc...) asparagine glycan. A helical membrane pass occupies residues 54 to 71; sequence SPYVAVCCVVMAFSILFM. A topological domain (cytoplasmic) is located at residue Q72.

Belongs to the KISH family.

Its subcellular location is the golgi apparatus membrane. Functionally, involved in the early part of the secretory pathway. This chain is Protein kish-A (tmem167a), found in Xenopus laevis (African clawed frog).